Here is a 246-residue protein sequence, read N- to C-terminus: Adenylate kinase 4 (246 aa).

Alanine 2 is subject to N-acetylalanine. Residue 43-48 (GSGKGT) coordinates ATP. The NMP stretch occupies residues 63-92 (STGDMLRAAVASKTPLGVKAKEAMEKGELV). Residues threonine 64, arginine 69, 90–92 (ELV), 118–121 (GFPR), and glutamine 125 each bind AMP. Residues 159-196 (GRWIHPSSGRSYHTKFAPPKTPGVDDITGEPLIQRKDD) form an LID region. Arginine 160 is a binding site for ATP. Residues arginine 193 and arginine 204 each contribute to the AMP site.

This sequence belongs to the adenylate kinase family. In terms of assembly, monomer.

The protein localises to the cytoplasm. It carries out the reaction AMP + ATP = 2 ADP. Its function is as follows. Catalyzes the reversible transfer of the terminal phosphate group between ATP and AMP. Plays an important role in cellular energy homeostasis and in adenine nucleotide metabolism. The chain is Adenylate kinase 4 (ADK1) from Arabidopsis thaliana (Mouse-ear cress).